The chain runs to 188 residues: ATP synthase subunit delta (188 aa).

The protein belongs to the ATPase delta chain family. As to quaternary structure, F-type ATPases have 2 components, F(1) - the catalytic core - and F(0) - the membrane proton channel. F(1) has five subunits: alpha(3), beta(3), gamma(1), delta(1), epsilon(1). F(0) has three main subunits: a(1), b(2) and c(10-14). The alpha and beta chains form an alternating ring which encloses part of the gamma chain. F(1) is attached to F(0) by a central stalk formed by the gamma and epsilon chains, while a peripheral stalk is formed by the delta and b chains.

The protein localises to the cell inner membrane. In terms of biological role, f(1)F(0) ATP synthase produces ATP from ADP in the presence of a proton or sodium gradient. F-type ATPases consist of two structural domains, F(1) containing the extramembraneous catalytic core and F(0) containing the membrane proton channel, linked together by a central stalk and a peripheral stalk. During catalysis, ATP synthesis in the catalytic domain of F(1) is coupled via a rotary mechanism of the central stalk subunits to proton translocation. Its function is as follows. This protein is part of the stalk that links CF(0) to CF(1). It either transmits conformational changes from CF(0) to CF(1) or is implicated in proton conduction. This Paracoccus denitrificans (strain Pd 1222) protein is ATP synthase subunit delta.